The chain runs to 149 residues: UPF0178 protein NT01CX_0440 (149 aa).

Belongs to the UPF0178 family.

The sequence is that of UPF0178 protein NT01CX_0440 from Clostridium novyi (strain NT).